The primary structure comprises 106 residues: uncharacterized protein (106 aa).

A helical membrane pass occupies residues alanine 9–leucine 27. The interval threonine 84 to valine 106 is disordered.

The protein belongs to the FliO/MopB family.

The protein resides in the cell membrane. The protein localises to the bacterial flagellum basal body. This is an uncharacterized protein from Caulobacter vibrioides (strain ATCC 19089 / CIP 103742 / CB 15) (Caulobacter crescentus).